Reading from the N-terminus, the 278-residue chain is Undecaprenyl-diphosphatase (278 aa).

A run of 8 helical transmembrane segments spans residues 14–34 (GTTE…PWLF), 40–60 (GLAF…AYFW), 89–109 (WAVI…NDVI), 121–141 (TAIV…WLAE), 153–173 (LGLR…LPGV), 196–216 (FSFI…TLKL), 227–247 (VLFV…IAFL), and 257–277 (SIFI…VSFA).

This sequence belongs to the UppP family.

It is found in the cell membrane. It carries out the reaction di-trans,octa-cis-undecaprenyl diphosphate + H2O = di-trans,octa-cis-undecaprenyl phosphate + phosphate + H(+). Catalyzes the dephosphorylation of undecaprenyl diphosphate (UPP). Confers resistance to bacitracin. This is Undecaprenyl-diphosphatase from Thermomicrobium roseum (strain ATCC 27502 / DSM 5159 / P-2).